Reading from the N-terminus, the 413-residue chain is Protein PBN1 (413 aa).

Topologically, residues 1–378 are lumenal; the sequence is MQSVRQTVLF…PVPRGNSNDF (378 aa). Residue Asn362 is glycosylated (N-linked (GlcNAc...) asparagine). The helical transmembrane segment at 379–401 threads the bilayer; that stretch reads PSIQYVTVLSILFSVLYISYCLF. Residues 402–413 lie on the Cytoplasmic side of the membrane; it reads RRPVAASARASG.

It belongs to the PIGX family.

The protein resides in the endoplasmic reticulum membrane. The protein operates within glycolipid biosynthesis; glycosylphosphatidylinositol-anchor biosynthesis. Functionally, required for proper folding and/or the stability of a subset of proteins in the endoplasmic reticulum. Component of glycosylphosphatidylinositol-mannosyltransferase 1 which transfers the first of the 4 mannoses in the GPI-anchor precursors during GPI-anchor biosynthesis. Probably acts by stabilizing the mannosyltransferase GPI14. This is Protein PBN1 (PBN1) from Eremothecium gossypii (strain ATCC 10895 / CBS 109.51 / FGSC 9923 / NRRL Y-1056) (Yeast).